The sequence spans 49 residues: EDNLSDLEGKEEAGDWDGDDNVLTVAAFAILFILSFLYSTFVTVVKVQQ.

N-linked (GlcNAc...) asparagine glycosylation occurs at Asn-3. A helical membrane pass occupies residues 25–45 (VAAFAILFILSFLYSTFVTVV).

In terms of tissue distribution, expressed in the spleen. May also be expressed in other lymphoid tissues.

The protein localises to the membrane. The chain is IgW transmembrane form Tm2T7/Tm7T7/Tm3T3 from Heterodontus francisci (Horn shark).